The primary structure comprises 193 residues: Peptidyl-tRNA hydrolase (193 aa).

Y16 contributes to the tRNA binding site. H21 acts as the Proton acceptor in catalysis. Residues F66, N68, and N114 each contribute to the tRNA site.

It belongs to the PTH family. As to quaternary structure, monomer.

The protein resides in the cytoplasm. It carries out the reaction an N-acyl-L-alpha-aminoacyl-tRNA + H2O = an N-acyl-L-amino acid + a tRNA + H(+). In terms of biological role, hydrolyzes ribosome-free peptidyl-tRNAs (with 1 or more amino acids incorporated), which drop off the ribosome during protein synthesis, or as a result of ribosome stalling. Catalyzes the release of premature peptidyl moieties from peptidyl-tRNA molecules trapped in stalled 50S ribosomal subunits, and thus maintains levels of free tRNAs and 50S ribosomes. The protein is Peptidyl-tRNA hydrolase of Trichlorobacter lovleyi (strain ATCC BAA-1151 / DSM 17278 / SZ) (Geobacter lovleyi).